The chain runs to 161 residues: N5-carboxyaminoimidazole ribonucleotide mutase (161 aa).

S9, D12, and R39 together coordinate substrate.

It belongs to the AIR carboxylase family. Class I subfamily.

The catalysed reaction is 5-carboxyamino-1-(5-phospho-D-ribosyl)imidazole + H(+) = 5-amino-1-(5-phospho-D-ribosyl)imidazole-4-carboxylate. Its pathway is purine metabolism; IMP biosynthesis via de novo pathway; 5-amino-1-(5-phospho-D-ribosyl)imidazole-4-carboxylate from 5-amino-1-(5-phospho-D-ribosyl)imidazole (N5-CAIR route): step 2/2. Catalyzes the conversion of N5-carboxyaminoimidazole ribonucleotide (N5-CAIR) to 4-carboxy-5-aminoimidazole ribonucleotide (CAIR). The sequence is that of N5-carboxyaminoimidazole ribonucleotide mutase from Vibrio cholerae serotype O1 (strain ATCC 39315 / El Tor Inaba N16961).